We begin with the raw amino-acid sequence, 164 residues long: Phosphopantetheine adenylyltransferase (164 aa).

T9 is a substrate binding site. ATP is bound by residues 9–10 (TF) and H17. Residues K41, T76, and R90 each contribute to the substrate site. ATP is bound by residues 91–93 (GLR), E101, and 126–132 (YQFVSSS).

Belongs to the bacterial CoaD family. As to quaternary structure, homohexamer. It depends on Mg(2+) as a cofactor.

It is found in the cytoplasm. It catalyses the reaction (R)-4'-phosphopantetheine + ATP + H(+) = 3'-dephospho-CoA + diphosphate. It functions in the pathway cofactor biosynthesis; coenzyme A biosynthesis; CoA from (R)-pantothenate: step 4/5. In terms of biological role, reversibly transfers an adenylyl group from ATP to 4'-phosphopantetheine, yielding dephospho-CoA (dPCoA) and pyrophosphate. The chain is Phosphopantetheine adenylyltransferase from Coprothermobacter proteolyticus (strain ATCC 35245 / DSM 5265 / OCM 4 / BT).